A 279-amino-acid chain; its full sequence is MEKIKIVTDSTCDLPEYIISKFDIEVLPLMVNVKGKSYFDIVDINFKQLSKIMDEENIFPTTSQVTPKRFNDCFAKYLKEGYKIICINMSSKMSGTYQSACIAKDMLESEDVVVIDSLNVTSGLGVLVLKACRLREEGKSFEEIKNEIIETIPHVKSALAFERLDNLIKGGRLSKTAGTIGNLLGIKLILEVKDGEMAIKDKVRGNKKAARVVLDCIKDESMNKEETTLLLNAENDDILPILRQKLIEQENKFIECEVGCVVGAHSGTKACGVFFIEKY.

The region spanning 4-277 (IKIVTDSTCD…TKACGVFFIE (274 aa)) is the DegV domain. Residues Thr62 and Ser94 each coordinate hexadecanoate.

May bind long-chain fatty acids, such as palmitate, and may play a role in lipid transport or fatty acid metabolism. This Clostridium acetobutylicum (strain ATCC 824 / DSM 792 / JCM 1419 / IAM 19013 / LMG 5710 / NBRC 13948 / NRRL B-527 / VKM B-1787 / 2291 / W) protein is DegV domain-containing protein CA_C0701.